The following is a 297-amino-acid chain: Phosphoribosylaminoimidazole-succinocarboxamide synthase (297 aa).

This sequence belongs to the SAICAR synthetase family.

The enzyme catalyses 5-amino-1-(5-phospho-D-ribosyl)imidazole-4-carboxylate + L-aspartate + ATP = (2S)-2-[5-amino-1-(5-phospho-beta-D-ribosyl)imidazole-4-carboxamido]succinate + ADP + phosphate + 2 H(+). It functions in the pathway purine metabolism; IMP biosynthesis via de novo pathway; 5-amino-1-(5-phospho-D-ribosyl)imidazole-4-carboxamide from 5-amino-1-(5-phospho-D-ribosyl)imidazole-4-carboxylate: step 1/2. The chain is Phosphoribosylaminoimidazole-succinocarboxamide synthase from Mycobacteroides abscessus (strain ATCC 19977 / DSM 44196 / CCUG 20993 / CIP 104536 / JCM 13569 / NCTC 13031 / TMC 1543 / L948) (Mycobacterium abscessus).